We begin with the raw amino-acid sequence, 594 residues long: APOBEC1 complementation factor (594 aa).

RRM domains are found at residues 56–134 (CEIF…ASVD), 136–218 (CRLF…WAEP), and 231–303 (KILY…LAKP). The required for nuclear localization stretch occupies residues 360 to 409 (HFPATKGHLSNRAIIRAPSVREIYMNVPVGAAGVRGLGGRGYLAYTGLGR). Phosphothreonine is present on Thr-499.

Part of the apolipoprotein B mRNA editing complex with APOBEC1. Interacts with TNPO2; TNPO2 may be responsible for transport of A1CF into the nucleus. Interacts with SYNCRIP. Interacts with CELF2/CUGBP2. Interacts with RBM47. In terms of tissue distribution, widely expressed with highest levels in brain, liver, pancreas, colon and spleen.

The protein localises to the nucleus. Its subcellular location is the endoplasmic reticulum. It is found in the cytoplasm. In terms of biological role, essential component of the apolipoprotein B mRNA editing enzyme complex which is responsible for the postranscriptional editing of a CAA codon for Gln to a UAA codon for stop in APOB mRNA. Binds to APOB mRNA and is probably responsible for docking the catalytic subunit, APOBEC1, to the mRNA to allow it to deaminate its target cytosine. The complex also protects the edited APOB mRNA from nonsense-mediated decay. This is APOBEC1 complementation factor (A1CF) from Homo sapiens (Human).